The chain runs to 248 residues: 1-(5-phosphoribosyl)-5-[(5-phosphoribosylamino)methylideneamino] imidazole-4-carboxamide isomerase (248 aa).

Asp-8 (proton acceptor) is an active-site residue. Asp-129 acts as the Proton donor in catalysis.

It belongs to the HisA/HisF family.

The protein resides in the cytoplasm. It catalyses the reaction 1-(5-phospho-beta-D-ribosyl)-5-[(5-phospho-beta-D-ribosylamino)methylideneamino]imidazole-4-carboxamide = 5-[(5-phospho-1-deoxy-D-ribulos-1-ylimino)methylamino]-1-(5-phospho-beta-D-ribosyl)imidazole-4-carboxamide. It participates in amino-acid biosynthesis; L-histidine biosynthesis; L-histidine from 5-phospho-alpha-D-ribose 1-diphosphate: step 4/9. This is 1-(5-phosphoribosyl)-5-[(5-phosphoribosylamino)methylideneamino] imidazole-4-carboxamide isomerase from Rhizobium etli (strain CIAT 652).